The sequence spans 185 residues: Elongation factor P (185 aa).

It belongs to the elongation factor P family.

It localises to the cytoplasm. Its pathway is protein biosynthesis; polypeptide chain elongation. Functionally, involved in peptide bond synthesis. Stimulates efficient translation and peptide-bond synthesis on native or reconstituted 70S ribosomes in vitro. Probably functions indirectly by altering the affinity of the ribosome for aminoacyl-tRNA, thus increasing their reactivity as acceptors for peptidyl transferase. This chain is Elongation factor P, found in Listeria innocua serovar 6a (strain ATCC BAA-680 / CLIP 11262).